A 254-amino-acid polypeptide reads, in one-letter code: Alcohol dehydrogenase (254 aa).

Residue 10–33 (FVAGLGGIGFDTSREIVKSGPKNL) participates in NAD(+) binding. S138 is a binding site for substrate. The active-site Proton acceptor is Y151.

This sequence belongs to the short-chain dehydrogenases/reductases (SDR) family. In terms of assembly, homodimer.

It carries out the reaction a primary alcohol + NAD(+) = an aldehyde + NADH + H(+). The enzyme catalyses a secondary alcohol + NAD(+) = a ketone + NADH + H(+). The protein is Alcohol dehydrogenase (Adh) of Drosophila mayaguana (Fruit fly).